The primary structure comprises 56 residues: Turripeptide XIV-01 (56 aa).

Positions 1 to 21 (MRFHVLLTVALLLTSLMSIEA) are cleaved as a signal peptide. The propeptide occupies 22–30 (KPVNGAEME).

In terms of processing, contains 2 disulfide bonds. Expressed by the venom duct.

It localises to the secreted. The polypeptide is Turripeptide XIV-01 (Gemmula speciosa (Splendid gem-turris)).